Here is a 117-residue protein sequence, read N- to C-terminus: Large ribosomal subunit protein bL19 (117 aa).

Belongs to the bacterial ribosomal protein bL19 family.

In terms of biological role, this protein is located at the 30S-50S ribosomal subunit interface and may play a role in the structure and function of the aminoacyl-tRNA binding site. This Blochmanniella floridana protein is Large ribosomal subunit protein bL19.